We begin with the raw amino-acid sequence, 273 residues long: Nitrogenase iron protein 5 (273 aa).

Residue 8–15 coordinates ATP; the sequence is GKGGIGKS. C94 is a binding site for [4Fe-4S] cluster. R97 bears the ADP-ribosylarginine; by dinitrogenase reductase ADP-ribosyltransferase mark. C129 contacts [4Fe-4S] cluster.

The protein belongs to the NifH/BchL/ChlL family. Homodimer. The cofactor is [4Fe-4S] cluster. In terms of processing, the reversible ADP-ribosylation of Arg-97 inactivates the nitrogenase reductase and regulates nitrogenase activity.

It catalyses the reaction N2 + 8 reduced [2Fe-2S]-[ferredoxin] + 16 ATP + 16 H2O = H2 + 8 oxidized [2Fe-2S]-[ferredoxin] + 2 NH4(+) + 16 ADP + 16 phosphate + 6 H(+). Functionally, the key enzymatic reactions in nitrogen fixation are catalyzed by the nitrogenase complex, which has 2 components: the iron protein and the molybdenum-iron protein. In Clostridium pasteurianum, this protein is Nitrogenase iron protein 5 (nifH5).